The following is an 821-amino-acid chain: MDKMAYKFIKWFEELRKDDVPLVGGKGANLGEMTNAGIPVPPGFCVTAEAYKYFVENVKVSKEDVKKILGEKANKGTIAEVLASAPDEPRTLQEWIMDIINRTNVDDSKQLQENTAIIRELIESLEMPNEIADEIKQAYKELSQRFGKDEIYVAVRSSATAEDLPEASFAGQQETYLDVLGADDVIDKVKKCWASLWTARATFYRAKQGFDHSKVYLSAVVQKMVNSEKSGVMFTANPVTNNRNEIMINASWGLGEAVVSGAVTPDEYIVEKGTWKIKEKVIAKKEVMVIRNPETGKGTVQVKVAEYLGPEWVEKQVLTDEQIIEVAKMGQKIEEHYGWPQDIEWAYDKDDGKLYIVQSRPITTLKETTTEEVEEVEEAEVILKGLGASPGIGAGRVVVIFDASEIDKVKEGDVLVTTMTNPDMVPAMKRASAIITDEGGRTSHAAIVSRELGIPAVVGTKEATKKLKTGDYVTVDGTRGLVYKGIVKSLVEKKKKEEAAAAPGAAVAAAPLVTGTLVKVNVSMPEVAERAAATGADGVGLLRAEHMILSIGQHPVKFIKEGKEDELVERLAEGIEKVAAAFYPRPVWYRTLDAPTNEFREMPGGEDEPEERNPMLGWRGIRRGLDQPELLRAEFKAIKKVVEKGYNNIGVMLPLVSHPEQIRKAKEIAREVGLEPHKDVAWGIMIEVPAAAIIIEDLIKEGIDFVSFGTNDLTQYTLAIDRDNERVAKLYDETHPAVLKLIKHVIKVCKKYGVETSICGQAGSDPKMARILVRLGIDSISANPDAVQLIRQVVAQEERKLMLEAARKKLLEEEEEEEDLF.

Catalysis depends on His-444, which acts as the Tele-phosphohistidine intermediate. Residues Arg-543, Arg-590, Glu-687, Gly-709, Thr-710, Asn-711, and Asp-712 each contribute to the substrate site. Glu-687 provides a ligand contact to Mg(2+). A Mg(2+)-binding site is contributed by Asp-712. The Proton donor role is filled by Cys-759.

The protein belongs to the PEP-utilizing enzyme family. The cofactor is Mg(2+).

It carries out the reaction pyruvate + ATP + H2O = phosphoenolpyruvate + AMP + phosphate + 2 H(+). Its pathway is carbohydrate biosynthesis; gluconeogenesis. Functionally, catalyzes the phosphorylation of pyruvate to phosphoenolpyruvate. The chain is Probable phosphoenolpyruvate synthase (ppsA) from Pyrococcus horikoshii (strain ATCC 700860 / DSM 12428 / JCM 9974 / NBRC 100139 / OT-3).